The primary structure comprises 323 residues: Mycothiol acetyltransferase (323 aa).

1D-myo-inositol 2-(L-cysteinylamino)-2-deoxy-alpha-D-glucopyranoside is bound at residue Glu44. 98–100 (LAV) is an acetyl-CoA binding site. In terms of domain architecture, N-acetyltransferase spans 173–323 (VSLRAFIPGQ…DVMYGPKNGG (151 aa)). Positions 200, 240, and 253 each coordinate 1D-myo-inositol 2-(L-cysteinylamino)-2-deoxy-alpha-D-glucopyranoside. Acetyl-CoA-binding positions include 257-259 (VGV) and 264-270 (QGMGLGK). Tyr291 serves as a coordination point for 1D-myo-inositol 2-(L-cysteinylamino)-2-deoxy-alpha-D-glucopyranoside.

It belongs to the acetyltransferase family. MshD subfamily. Monomer.

The enzyme catalyses 1D-myo-inositol 2-(L-cysteinylamino)-2-deoxy-alpha-D-glucopyranoside + acetyl-CoA = mycothiol + CoA + H(+). Catalyzes the transfer of acetyl from acetyl-CoA to desacetylmycothiol (Cys-GlcN-Ins) to form mycothiol. This chain is Mycothiol acetyltransferase, found in Arthrobacter sp. (strain FB24).